Consider the following 117-residue polypeptide: Putative membrane protein insertion efficiency factor (117 aa).

The interval 87-117 (RKGGPSAAEPAIEGHIPSSPAAETPSHVQGA) is disordered.

The protein belongs to the UPF0161 family.

Its subcellular location is the cell membrane. Functionally, could be involved in insertion of integral membrane proteins into the membrane. This is Putative membrane protein insertion efficiency factor from Streptomyces avermitilis (strain ATCC 31267 / DSM 46492 / JCM 5070 / NBRC 14893 / NCIMB 12804 / NRRL 8165 / MA-4680).